We begin with the raw amino-acid sequence, 379 residues long: MTAIRYEFIKKCKQTGARLGRVHTPHGSFDTPTFMPVGTLATVKTMSPEELKAMDSGIILSNTYHLWLRPGHEIVREAGGLHKFMNWDRAILTDSGGFQVFSLSDFRRIEEEGVYFRNHLNGDKLFLSPEKAMEIQNALGSDIMMAFDECPPFPATFEYMKKSVERTSRWAERCLNAHQRPEDQGLFGIVQGGEFEELRRQSAKDLVSMDFPGYAVGGLSVGEPKDIMNRVLEFTTPLLPENKPRYLMGVGSPDSLIDGAIRGIDMFDCVLPTRIARNGTCMTSQGRLVVKNAKFARDFGPLDPNCDCYTCKNYSRAYIRHLMKCDETFGIRLTSYHNLHFLLNLMEQVRQAIREDRLGDFREEFFEQYGFNKPNAKNF.

Catalysis depends on aspartate 94, which acts as the Proton acceptor. Residues 94 to 98 (DSGGF), aspartate 148, glutamine 191, and glycine 218 each bind substrate. The interval 249-255 (GVGSPDS) is RNA binding. The active-site Nucleophile is aspartate 268. The tract at residues 273–277 (TRIAR) is RNA binding; important for wobble base 34 recognition. Zn(2+) contacts are provided by cysteine 306, cysteine 308, cysteine 311, and histidine 337.

This sequence belongs to the queuine tRNA-ribosyltransferase family. As to quaternary structure, homodimer. Within each dimer, one monomer is responsible for RNA recognition and catalysis, while the other monomer binds to the replacement base PreQ1. Requires Zn(2+) as cofactor.

The catalysed reaction is 7-aminomethyl-7-carbaguanine + guanosine(34) in tRNA = 7-aminomethyl-7-carbaguanosine(34) in tRNA + guanine. It functions in the pathway tRNA modification; tRNA-queuosine biosynthesis. Its function is as follows. Catalyzes the base-exchange of a guanine (G) residue with the queuine precursor 7-aminomethyl-7-deazaguanine (PreQ1) at position 34 (anticodon wobble position) in tRNAs with GU(N) anticodons (tRNA-Asp, -Asn, -His and -Tyr). Catalysis occurs through a double-displacement mechanism. The nucleophile active site attacks the C1' of nucleotide 34 to detach the guanine base from the RNA, forming a covalent enzyme-RNA intermediate. The proton acceptor active site deprotonates the incoming PreQ1, allowing a nucleophilic attack on the C1' of the ribose to form the product. After dissociation, two additional enzymatic reactions on the tRNA convert PreQ1 to queuine (Q), resulting in the hypermodified nucleoside queuosine (7-(((4,5-cis-dihydroxy-2-cyclopenten-1-yl)amino)methyl)-7-deazaguanosine). This chain is Queuine tRNA-ribosyltransferase, found in Bacillus cytotoxicus (strain DSM 22905 / CIP 110041 / 391-98 / NVH 391-98).